Consider the following 81-residue polypeptide: Protein Vpu (81 aa).

The Extracellular segment spans residues 1–7 (MQPLVIA). The chain crosses the membrane as a helical span at residues 8-28 (AIVALVVAGIIAIVVWSIVFI). At 29–81 (EYRKIRRQRKIDKLIDRISERAEDSGNESEGDQEELSALVGMGHDAPWVINDL) the chain is on the cytoplasmic side. 2 positions are modified to phosphoserine; by host CK2: serine 53 and serine 57.

It belongs to the HIV-1 VPU protein family. As to quaternary structure, homopentamer. Interacts with host CD4 and BRTC; these interactions induce proteasomal degradation of CD4. Interacts with host BST2; this interaction leads to the degradation of host BST2. Interacts with host FBXW11. Interacts with host AP1M1; this interaction plays a role in the mistrafficking and subsequent degradation of host BST2. Interacts with host RANBP2; this interaction allows Vpu to down-regulate host BLM sumoylation. Post-translationally, phosphorylated by host CK2. This phosphorylation is necessary for interaction with human BTRC and degradation of CD4.

It localises to the host membrane. Ion channel activity is inhibited by hexamethylene amiloride in vitro. Enhances virion budding by targeting host CD4 and Tetherin/BST2 to proteasome degradation. Degradation of CD4 prevents any unwanted premature interactions between viral Env and its host receptor CD4 in the endoplasmic reticulum. Degradation of antiretroviral protein Tetherin/BST2 is important for virion budding, as BST2 tethers new viral particles to the host cell membrane. Mechanistically, Vpu bridges either CD4 or BST2 to BTRC, a substrate recognition subunit of the Skp1/Cullin/F-box protein E3 ubiquitin ligase, induces their ubiquitination and subsequent proteasomal degradation. The alteration of the E3 ligase specificity by Vpu seems to promote the degradation of host IKBKB, leading to NF-kappa-B down-regulation and subsequent apoptosis. Acts as a viroporin that forms an oligomeric ion channel in membranes. Modulates the host DNA repair mechanisms to promote degradation of nuclear viral cDNA in cells that are already productively infected in order to suppress immune sensing and proviral hyper-integration (superinfection). Manipulates PML-NBs and modulates SUMOylation of host BLM protein thereby enhancing its DNA-end processing activity toward viral unintegrated linear DNA. Also inhibits RAD52-mediated homologous repair of viral cDNA, preventing the generation of dead-end circular forms of single copies of the long terminal repeat and permitting sustained nucleolytic attack. The chain is Protein Vpu from Homo sapiens (Human).